A 118-amino-acid chain; its full sequence is NAD(P)H-quinone oxidoreductase subunit M (118 aa).

Belongs to the complex I NdhM subunit family. In terms of assembly, NDH-1 can be composed of about 15 different subunits; different subcomplexes with different compositions have been identified which probably have different functions.

Its subcellular location is the cellular thylakoid membrane. The enzyme catalyses a plastoquinone + NADH + (n+1) H(+)(in) = a plastoquinol + NAD(+) + n H(+)(out). It catalyses the reaction a plastoquinone + NADPH + (n+1) H(+)(in) = a plastoquinol + NADP(+) + n H(+)(out). In terms of biological role, NDH-1 shuttles electrons from an unknown electron donor, via FMN and iron-sulfur (Fe-S) centers, to quinones in the respiratory and/or the photosynthetic chain. The immediate electron acceptor for the enzyme in this species is believed to be plastoquinone. Couples the redox reaction to proton translocation, and thus conserves the redox energy in a proton gradient. Cyanobacterial NDH-1 also plays a role in inorganic carbon-concentration. This is NAD(P)H-quinone oxidoreductase subunit M from Rippkaea orientalis (strain PCC 8801 / RF-1) (Cyanothece sp. (strain PCC 8801)).